Here is a 973-residue protein sequence, read N- to C-terminus: Nuclear factor NF-kappa-B p105 subunit (973 aa).

The region spanning 38–245 is the RHD domain; that stretch reads ADGPYLQILE…DAIYDSKAPN (208 aa). Position 60 is an S-nitrosocysteine; alternate (C60). Residue C60 is the site of S-(15-deoxy-Delta12,14-prostaglandin J2-9-yl)cysteine; alternate attachment. Residue K324 forms a Glycyl lysine isopeptide (Lys-Gly) (interchain with G-Cter in SUMO2) linkage. Phosphoserine is present on S336. The Nuclear localization signal signature appears at 359–364; it reads QRKRQK. Residues 371 to 394 form a GRR region; sequence DSFGGGSGAGAGGGGMFGSGGGGG. Residues 434–467 form a disordered region; the sequence is TINTKFKNEPRDCAKSDDREILNPPEKETQGEGP. Residues 435-973 are interaction with CFLAR; that stretch reads INTKFKNEPR…GQDGPIEGKI (539 aa). Over residues 439-463 the composition is skewed to basic and acidic residues; that stretch reads FKNEPRDCAKSDDREILNPPEKETQ. At K440 the chain carries N6-acetyllysine. S449 is modified (phosphoserine). ANK repeat units follow at residues 540–570, 579–608, 612–641, 648–677, 682–711, and 716–745; these read NGDSVLHLAIIHLHAQLVRDLLEVTSGSISD, LYQTPLHLAVITKQEDVVEDLLRVGADLSL, WGNSVLHLAAKEGHDKILGVLLKNSKAALL, EGLNAIHIAVMSNSLSCLQLLVAAGAEVNA, SGRTALHLAVEYDNISLAGCLLLEGDALVD, and DGTTPLHIAAGRGSTRLAALLKAAGADPLV. The interval 648–682 is essential for interaction with HIF1AN; that stretch reads EGLNAIHIAVMSNSLSCLQLLVAAGAEVNAQEQKS. Position 676 is a (3S)-3-hydroxyasparagine; by HIF1AN (N676). The residue at position 757 (S757) is a Phosphoserine. Residues 769–799 form an ANK 7 repeat; sequence PGTTPLDMAANWQVFDILNGKPYEPVFTSDD. In terms of domain architecture, Death spans 803-890; the sequence is QGDIKQLTED…EAIEVIQAAF (88 aa). Position 898 is a phosphoserine (S898). Phosphoserine; by GSK3-beta; in vitro is present on S912. At S928 the chain carries Phosphoserine. S932 and S937 each carry phosphoserine; by IKKB. S942 is modified (phosphoserine). Residue T948 is modified to Phosphothreonine.

As to quaternary structure, component of the NF-kappa-B p65-p50 complex. Homodimer; component of the NF-kappa-B p50-p50 complex. Component of the NF-kappa-B p105-p50 complex. Component of the NF-kappa-B p50-c-Rel complex. Component of a complex consisting of the NF-kappa-B p50-p50 homodimer and BCL3. Also interacts with MAP3K8. NF-kappa-B p50 subunit interacts with NCOA3 coactivator, which may coactivate NF-kappa-B dependent expression via its histone acetyltransferase activity. Interacts with TSC22D3; this interaction prevents nuclear translocation and DNA-binding. Interacts with SPAG9 and UNC5CL. NFKB1/p105 interacts with CFLAR; the interaction inhibits p105 processing into p50. NFKB1/p105 forms a ternary complex with MAP3K8 and TNIP2. Interacts with GSK3B; the interaction prevents processing of p105 to p50. NFKB1/p50 interacts with NFKBIE. NFKB1/p50 interacts with NFKBIZ. Nuclear factor NF-kappa-B p50 subunit interacts with NFKBID. Directly interacts with MEN1. Interacts with HIF1AN. Interacts with FEM1A; interaction is direct. Generation of the NF-kappa-B p50 (Nuclear factor NF-kappa-B p50 subunit) transcription factor takes place both cotranslationally and post-translationally via non-mutually exclusive mechanisms. A cotranslational processing allows the production of both p50 and p105 (Nuclear factor NF-kappa-B p105 subunit) from a single NFKB1 mRNA. While translation occurs, the particular unfolded structure after the GRR repeat region acts as a substrate for the proteasome, promoting degradation of the C-terminus. The GRR acts as a proteasomal 'stop signal', protecting the region upstream of the GRR from degradation and promoting generation of p50. It is unclear if limited proteasome degradation during cotranslational processing depends on ubiquitination. NF-kappa-B p50 is also generated post-translationally following ubiquitination by the KPC complex, leading to limited processing by the proteasome downstream of the GRR region, thereby generating p50. Post-translationally, phosphorylation at the C-terminus by IKBKB/IKKB acts as a signal for ubiquitination and promotes either complete degradation or processing to generate the NF-kappa-B p50 (Nuclear factor NF-kappa-B p50 subunit). Phosphorylation at Ser-912 primes p105 for proteolytic processing in response to TNF-alpha stimulation. Phosphorylation at Ser-928, Ser-932 and Ser-937 are required for BTRC/BTRCP-mediated ubiquitination and proteolysis. Phosphorylation at Ser-932 is also required for ubiquitination by the KPC complex and limited processing to generate NF-kappa-B p50 (Nuclear factor NF-kappa-B p50 subunit). In terms of processing, polyubiquitinated at multiple Lys residues in the C-terminus. Polyubiquitinated by the SCF(FBXW11) and SCF(BTRC) complexes following phosphorylation at Ser-928, Ser-932 and Ser-937, leading to its complete degradation. In contrast, polyubiquitination by the KPC complex following phosphorylation at Ser-932 leads to limited proteosomal processing and generation of the active NF-kappa-B p50 (Nuclear factor NF-kappa-B p50 subunit). S-nitrosylation of Cys-60 affects DNA binding. Post-translationally, the covalent modification of cysteine by 15-deoxy-Delta12,14-prostaglandin-J2 is autocatalytic and reversible. It may occur as an alternative to other cysteine modifications, such as S-nitrosylation and S-palmitoylation.

It localises to the cytoplasm. Its subcellular location is the nucleus. Functionally, NF-kappa-B is a pleiotropic transcription factor present in almost all cell types and is the endpoint of a series of signal transduction events that are initiated by a vast array of stimuli related to many biological processes such as inflammation, immunity, differentiation, cell growth, tumorigenesis and apoptosis. NF-kappa-B is a homo- or heterodimeric complex formed by the Rel-like domain-containing proteins RELA/p65, RELB, NFKB1/p105, NFKB1/p50, REL and NFKB2/p52 and the heterodimeric p65-p50 complex appears to be most abundant one. The dimers bind at kappa-B sites in the DNA of their target genes and the individual dimers have distinct preferences for different kappa-B sites that they can bind with distinguishable affinity and specificity. Different dimer combinations act as transcriptional activators or repressors, respectively. NF-kappa-B is controlled by various mechanisms of post-translational modification and subcellular compartmentalization as well as by interactions with other cofactors or corepressors. NF-kappa-B complexes are held in the cytoplasm in an inactive state complexed with members of the NF-kappa-B inhibitor (I-kappa-B) family. In a conventional activation pathway, I-kappa-B is phosphorylated by I-kappa-B kinases (IKKs) in response to different activators, subsequently degraded thus liberating the active NF-kappa-B complex which translocates to the nucleus. NF-kappa-B heterodimeric p65-p50 and RelB-p50 complexes are transcriptional activators. The NF-kappa-B p50-p50 homodimer is a transcriptional repressor, but can act as a transcriptional activator when associated with BCL3. NFKB1 appears to have dual functions such as cytoplasmic retention of attached NF-kappa-B proteins by p105 and generation of p50 by a cotranslational processing. The proteasome-mediated process ensures the production of both p50 and p105 and preserves their independent function, although processing of NFKB1/p105 also appears to occur post-translationally. p50 binds to the kappa-B consensus sequence 5'-GGRNNYYCC-3', located in the enhancer region of genes involved in immune response and acute phase reactions. In a complex with MAP3K8, NFKB1/p105 represses MAP3K8-induced MAPK signaling; active MAP3K8 is released by proteasome-dependent degradation of NFKB1/p105. In terms of biological role, P105 is the precursor of the active p50 subunit (Nuclear factor NF-kappa-B p50 subunit) of the nuclear factor NF-kappa-B. Acts as a cytoplasmic retention of attached NF-kappa-B proteins by p105. Its function is as follows. Constitutes the active form, which associates with RELA/p65 to form the NF-kappa-B p65-p50 complex to form a transcription factor. Together with RELA/p65, binds to the kappa-B consensus sequence 5'-GGRNNYYCC-3', located in the enhancer region of genes involved in immune response and acute phase reactions. This Rattus norvegicus (Rat) protein is Nuclear factor NF-kappa-B p105 subunit (Nfkb1).